A 753-amino-acid polypeptide reads, in one-letter code: Ribosome biogenesis protein BOP1 homolog (753 aa).

The disordered stretch occupies residues 1 to 155 (MTKRSKGANE…RNTVGNVPLK (155 aa)). 2 stretches are compositionally biased toward basic and acidic residues: residues 7 to 18 (GANEDKLIETKS) and 30 to 41 (KPVEAESLKEED). 2 stretches are compositionally biased toward acidic residues: residues 64–75 (DDFDSDFSDSED) and 83–109 (EDGD…DDDG). Residues 110-121 (SEHVGSDNNEEH) show a composition bias toward basic and acidic residues. Positions 122–142 (GSDEDSERGEAVEESDSSEDE) are enriched in acidic residues. WD repeat units follow at residues 421–462 (GHTG…KVWQ), 464–502 (DEAI…DEEQ), 539–581 (RHFK…TQRL), 626–665 (TGLR…KPYK), 669–708 (NHPK…DLNQ), and 722–753 (SSKG…LYCH).

The protein belongs to the WD repeat BOP1/ERB1 family. As to quaternary structure, interacts with PES. Interacts with WDR12.

The protein localises to the nucleus. It localises to the nucleolus. The protein resides in the nucleoplasm. Functionally, required for maturation of ribosomal RNAs and formation of the large ribosomal subunit. Plays an essential role in cell growth and survival through its regulation of ribosome biogenesis and mitotic progression. The polypeptide is Ribosome biogenesis protein BOP1 homolog (Arabidopsis thaliana (Mouse-ear cress)).